The chain runs to 1357 residues: DNA-directed RNA polymerase subunit beta (1357 aa).

The protein belongs to the RNA polymerase beta chain family. In terms of assembly, the RNAP catalytic core consists of 2 alpha, 1 beta, 1 beta' and 1 omega subunit. When a sigma factor is associated with the core the holoenzyme is formed, which can initiate transcription.

The enzyme catalyses RNA(n) + a ribonucleoside 5'-triphosphate = RNA(n+1) + diphosphate. Its function is as follows. DNA-dependent RNA polymerase catalyzes the transcription of DNA into RNA using the four ribonucleoside triphosphates as substrates. The protein is DNA-directed RNA polymerase subunit beta of Pseudomonas entomophila (strain L48).